A 118-amino-acid chain; its full sequence is NADH-quinone oxidoreductase subunit A (118 aa).

The next 3 membrane-spanning stretches (helical) occupy residues 8–28, 64–84, and 87–107; these read IGIF…LAFF, ALAF…AVAF, and VGLY…AGLL.

This sequence belongs to the complex I subunit 3 family. In terms of assembly, NDH-1 is composed of 14 different subunits. Subunits NuoA, H, J, K, L, M, N constitute the membrane sector of the complex.

The protein resides in the cell membrane. The enzyme catalyses a quinone + NADH + 5 H(+)(in) = a quinol + NAD(+) + 4 H(+)(out). NDH-1 shuttles electrons from NADH, via FMN and iron-sulfur (Fe-S) centers, to quinones in the respiratory chain. The immediate electron acceptor for the enzyme in this species is believed to be ubiquinone. Couples the redox reaction to proton translocation (for every two electrons transferred, four hydrogen ions are translocated across the cytoplasmic membrane), and thus conserves the redox energy in a proton gradient. The protein is NADH-quinone oxidoreductase subunit A of Chloroflexus aurantiacus (strain ATCC 29366 / DSM 635 / J-10-fl).